The primary structure comprises 604 residues: Elongation factor 4 (604 aa).

Residues 10–191 enclose the tr-type G domain; it reads KNIRNFSIIA…KIITTIPAPS (182 aa). GTP is bound by residues 22-27 and 138-141; these read DHGKST and NKID.

This sequence belongs to the TRAFAC class translation factor GTPase superfamily. Classic translation factor GTPase family. LepA subfamily.

The protein resides in the cell inner membrane. It carries out the reaction GTP + H2O = GDP + phosphate + H(+). Functionally, required for accurate and efficient protein synthesis under certain stress conditions. May act as a fidelity factor of the translation reaction, by catalyzing a one-codon backward translocation of tRNAs on improperly translocated ribosomes. Back-translocation proceeds from a post-translocation (POST) complex to a pre-translocation (PRE) complex, thus giving elongation factor G a second chance to translocate the tRNAs correctly. Binds to ribosomes in a GTP-dependent manner. The chain is Elongation factor 4 from Helicobacter acinonychis (strain Sheeba).